A 224-amino-acid chain; its full sequence is LexA repressor (224 aa).

The segment at residues 31 to 51 (RAEIAAEFGFKSANAAEEHLQ) is a DNA-binding region (H-T-H motif). Catalysis depends on for autocatalytic cleavage activity residues S142 and K179.

Belongs to the peptidase S24 family. Homodimer.

The enzyme catalyses Hydrolysis of Ala-|-Gly bond in repressor LexA.. Represses a number of genes involved in the response to DNA damage (SOS response), including recA and lexA. In the presence of single-stranded DNA, RecA interacts with LexA causing an autocatalytic cleavage which disrupts the DNA-binding part of LexA, leading to derepression of the SOS regulon and eventually DNA repair. This is LexA repressor from Paracidovorax citrulli (strain AAC00-1) (Acidovorax citrulli).